The sequence spans 259 residues: Type-2Aa cytolytic delta-endotoxin (259 aa).

Belongs to the cyt1/cyt2 endotoxin family. As to quaternary structure, homodimer (protoxin) and monomer (active toxin). In terms of processing, active after proteolytic processing.

Its function is as follows. Kills the larvae of dipteran insects by making pores in the epithelial cell membrane of the insect midgut. The protein is Type-2Aa cytolytic delta-endotoxin (cyt2Aa1) of Bacillus thuringiensis subsp. kyushuensis.